The primary structure comprises 103 residues: uncharacterized protein (103 aa).

The next 2 membrane-spanning stretches (helical) occupy residues 13 to 33 (LLPF…YCIL) and 77 to 97 (FSIY…PYLF).

The protein resides in the endoplasmic reticulum membrane. This is an uncharacterized protein from Schizosaccharomyces pombe (strain 972 / ATCC 24843) (Fission yeast).